A 111-amino-acid polypeptide reads, in one-letter code: Dynein light chain Tctex-type (111 aa).

Belongs to the dynein light chain Tctex-type family.

It is found in the cytoplasm. Its subcellular location is the cytoskeleton. In terms of biological role, acts as a non-catalytic accessory component of a dynein complex. The chain is Dynein light chain Tctex-type (dlc1) from Schizosaccharomyces pombe (strain 972 / ATCC 24843) (Fission yeast).